Here is a 537-residue protein sequence, read N- to C-terminus: Nedd4 binding protein 3 (537 aa).

Position 172 is a phosphoserine (Ser172). Disordered stretches follow at residues Leu173–Cys234, Arg327–Ala359, and Leu422–Glu456. The span at Pro178–Gly207 shows a compositional bias: low complexity. Residues Val295–Glu523 adopt a coiled-coil conformation.

This sequence belongs to the N4BP3 family. In terms of assembly, binds NEDD4. Interacts with 14-3-3 proteins. Interacts with MAVS.

The protein resides in the cytoplasmic vesicle. The protein localises to the cell projection. It is found in the axon. Its subcellular location is the dendrite. Plays a positive role in the antiviral innate immune signaling pathway. Mechanistically, interacts with MAVS and functions as a positive regulator to promote 'Lys-63'-linked polyubiquitination of MAVS and thus strengthens the interaction between MAVS and TRAF2. Also plays a role in axon and dendrite arborization during cranial nerve development. May also be important for neural crest migration and early development of other anterior structures including eye, brain and cranial cartilage. The chain is Nedd4 binding protein 3 from Rattus norvegicus (Rat).